A 221-amino-acid chain; its full sequence is Uridylate kinase (221 aa).

7–11 (KISGK) contacts ATP. Glycine 43 contributes to the UMP binding site. 2 residues coordinate ATP: glycine 44 and arginine 48. UMP is bound by residues aspartate 62 and 109–115 (LQPGQST). Threonine 135 and tyrosine 141 together coordinate ATP.

It belongs to the UMP kinase family. In terms of assembly, homohexamer.

It is found in the cytoplasm. The enzyme catalyses UMP + ATP = UDP + ADP. It functions in the pathway pyrimidine metabolism; CTP biosynthesis via de novo pathway; UDP from UMP (UMPK route): step 1/1. With respect to regulation, inhibited by UTP. In terms of biological role, catalyzes the reversible phosphorylation of UMP to UDP. In Ignicoccus hospitalis (strain KIN4/I / DSM 18386 / JCM 14125), this protein is Uridylate kinase.